The sequence spans 290 residues: 4-hydroxybenzoate octaprenyltransferase (290 aa).

Transmembrane regions (helical) follow at residues 38–58, 99–119, 141–161, 213–233, 238–258, and 268–288; these read LAGMAIPALGTLTVFILGVFF, LFGALVGISFALVLTLNSMTI, LPQLVLGAAFGWSIPMVFTAV, LIIGLLQLATLLLLGVIGWQL, IYYLALAGAAGLFLWQQKLIV, and AFLNNNLVGMLIFVGILLSLL.

The protein belongs to the UbiA prenyltransferase family. The cofactor is Mg(2+).

It is found in the cell inner membrane. It carries out the reaction all-trans-octaprenyl diphosphate + 4-hydroxybenzoate = 4-hydroxy-3-(all-trans-octaprenyl)benzoate + diphosphate. The protein operates within cofactor biosynthesis; ubiquinone biosynthesis. Functionally, catalyzes the prenylation of para-hydroxybenzoate (PHB) with an all-trans polyprenyl group. Mediates the second step in the final reaction sequence of ubiquinone-8 (UQ-8) biosynthesis, which is the condensation of the polyisoprenoid side chain with PHB, generating the first membrane-bound Q intermediate 3-octaprenyl-4-hydroxybenzoate. This chain is 4-hydroxybenzoate octaprenyltransferase, found in Sodalis glossinidius (strain morsitans).